The following is a 225-amino-acid chain: Cbp/p300-interacting transactivator 2 (225 aa).

Belongs to the CITED family.

Its subcellular location is the nucleus. In terms of biological role, transcriptional coactivator or corepressor of the p300/CBP-mediated transcription complex. May be involved in sex determination, early gonad development, left-right patterning during embryogenesis and differentiation of the adrenal cortex. The protein is Cbp/p300-interacting transactivator 2 (cited2) of Xenopus laevis (African clawed frog).